The chain runs to 279 residues: Very long chain fatty acid elongase 2 (279 aa).

A run of 7 helical transmembrane segments spans residues 12 to 32, 50 to 70, 98 to 118, 136 to 156, 158 to 178, 188 to 208, and 213 to 233; these read WFLLDSYLPTFTLTIVYLLSI, ILTLYNLGITLLSAYMLVELV, VLWWYYFSKLVEFLDTIFFVL, MFNIWWCVLNWIPCGQSFFGP, LNSFIHILMYSYYGLSVFPSM, LTQAQLVQFVLTITHTLSAVV, and FPFGCLIFQSSYMMTLVILFL. A Di-lysine motif motif is present at residues 276–279; the sequence is KKVQ.

This sequence belongs to the ELO family. ELOVL2 subfamily. As to quaternary structure, interacts with TECR.

It is found in the endoplasmic reticulum membrane. It catalyses the reaction a very-long-chain acyl-CoA + malonyl-CoA + H(+) = a very-long-chain 3-oxoacyl-CoA + CO2 + CoA. The enzyme catalyses (7Z,10Z,13Z,16Z,19Z)-docosapentaenoyl-CoA + malonyl-CoA + H(+) = (9Z,12Z,15Z,18Z,21Z)-3-oxotetracosapentaenoyl-CoA + CO2 + CoA. It carries out the reaction (5Z,8Z,11Z,14Z,17Z)-eicosapentaenoyl-CoA + malonyl-CoA + H(+) = 3-oxo-(7Z,10Z,13Z,16Z,19Z)-docosapentaenoyl-CoA + CO2 + CoA. The catalysed reaction is (5Z,8Z,11Z,14Z)-eicosatetraenoyl-CoA + malonyl-CoA + H(+) = (7Z,10Z,13Z,16Z)-3-oxodocosatetraenoyl-CoA + CO2 + CoA. It catalyses the reaction (7Z,10Z,13Z,16Z)-docosatetraenoyl-CoA + malonyl-CoA + H(+) = (9Z,12Z,15Z,18Z)-3-oxotetracosatetraenoyl-CoA + CO2 + CoA. The protein operates within lipid metabolism; polyunsaturated fatty acid biosynthesis. Its function is as follows. Catalyzes the first and rate-limiting reaction of the four reactions that constitute the long-chain fatty acids elongation cycle. This endoplasmic reticulum-bound enzymatic process allows the addition of 2 carbons to the chain of long- and very long-chain fatty acids (VLCFAs) per cycle. Condensing enzyme that catalyzes the synthesis of polyunsaturated very long chain fatty acid (C20- and C22-PUFA), acting specifically toward polyunsaturated acyl-CoA with the higher activity toward C20:4(n-6) acyl-CoA. May participate in the production of polyunsaturated VLCFAs of different chain lengths that are involved in multiple biological processes as precursors of membrane lipids and lipid mediators. The sequence is that of Very long chain fatty acid elongase 2 from Rattus norvegicus (Rat).